A 528-amino-acid polypeptide reads, in one-letter code: OLD nuclease (528 aa).

The ATPase domain N-terminus stretch occupies residues 1–153 (MLKRLQVKNF…LAQHLPSIRG (153 aa)). 31–35 (GAGKT) serves as a coordination point for ATP. The segment at 154–245 (SILGRLLQPV…RESDLTLPGD (92 aa)) is dimerization domain. The ATPase domain C-terminus stretch occupies residues 246-369 (ELGLGIQSAI…FDTARNEVLF (124 aa)). The toprim domain stretch occupies residues 370–528 (AKRALLVEGY…IRQVTRPMEE (159 aa)). Positions 377, 381, 431, and 433 each coordinate a divalent metal cation. The interval 440–461 (RADEETRRKQEQENKAEQEKNQ) is disordered. Residues Ser478 and Glu480 each coordinate a divalent metal cation. Arg487 functions as the Stabilizes transition state or protonates leaving group in the catalytic mechanism.

It belongs to the class 1 OLD nuclease family. As to quaternary structure, homodimer. Mg(2+) serves as cofactor. It depends on Mn(2+) as a cofactor. Requires Ca(2+) as cofactor.

The enzyme catalyses Exonucleolytic cleavage in the 5'- to 3'-direction to yield nucleoside 5'-phosphates.. An exodeoxyribonuclease that degrades linear or supercoiled dsDNA from 5'-3'. Nicks and linearizes circular DNA. Activity is not stimulated by ATP or AMP-PNP, although it has DNA-stimulated ATPase activity. The protein is OLD nuclease of Thermus scotoductus (strain ATCC 700910 / SA-01).